The primary structure comprises 820 residues: ATP-dependent RNA helicase drs1 (820 aa).

The interval 1–278 (MAPPKKRTAP…IESEVDAEEE (278 aa)) is disordered. The span at 83–102 (AASEPEEGSEEEEDAGEDDG) shows a compositional bias: acidic residues. The span at 130 to 145 (DETKDGAKKNGDKQGV) shows a compositional bias: basic and acidic residues. Acidic residues-rich tracts occupy residues 172 to 185 (ESED…DDAS), 232 to 245 (DSED…DAAS), and 260 to 277 (VASD…DAEE). The Q motif signature appears at 302-330 (KSFQEFNLSRPILRGLAAVNFTNPTPIQR). Positions 333-507 (IPVALLGKDI…RVGLNRPVRL (175 aa)) constitute a Helicase ATP-binding domain. An ATP-binding site is contributed by 346 to 353 (AVTGSGKT). The short motif at 455–458 (DEAD) is the DEAD box element. Residues 537–714 (YLLHLCKEVY…KIEKQLAQAE (178 aa)) form the Helicase C-terminal domain. Residues 681-729 (AVADRWAQKAKDLEEEINAVLEEEKIEKQLAQAEMQVTRSENMIKHEAE) adopt a coiled-coil conformation. The segment at 759-820 (LDSVKSKKEK…KKENKKKGKK (62 aa)) is disordered. Over residues 769 to 786 (VRLSNKDKKRLDDSRQRN) the composition is skewed to basic and acidic residues. The segment covering 806–820 (KIQKGKKENKKKGKK) has biased composition (basic residues).

This sequence belongs to the DEAD box helicase family. DDX27/DRS1 subfamily. As to quaternary structure, associates with pre-ribosomal particles.

The protein resides in the nucleus. The protein localises to the nucleolus. The enzyme catalyses ATP + H2O = ADP + phosphate + H(+). ATP-binding RNA helicase involved in ribosome assembly. This Aspergillus oryzae (strain ATCC 42149 / RIB 40) (Yellow koji mold) protein is ATP-dependent RNA helicase drs1 (drs1).